The sequence spans 378 residues: Phosphoserine aminotransferase (378 aa).

Residue Arg53 coordinates L-glutamate. Positions 117, 167, 190, and 213 each coordinate pyridoxal 5'-phosphate. Position 214 is an N6-(pyridoxal phosphate)lysine (Lys214). Position 255 to 256 (255 to 256 (NT)) interacts with pyridoxal 5'-phosphate.

The protein belongs to the class-V pyridoxal-phosphate-dependent aminotransferase family. SerC subfamily. Homodimer. Pyridoxal 5'-phosphate is required as a cofactor.

The protein resides in the cytoplasm. It catalyses the reaction O-phospho-L-serine + 2-oxoglutarate = 3-phosphooxypyruvate + L-glutamate. The enzyme catalyses 4-(phosphooxy)-L-threonine + 2-oxoglutarate = (R)-3-hydroxy-2-oxo-4-phosphooxybutanoate + L-glutamate. It participates in amino-acid biosynthesis; L-serine biosynthesis; L-serine from 3-phospho-D-glycerate: step 2/3. It functions in the pathway cofactor biosynthesis; pyridoxine 5'-phosphate biosynthesis; pyridoxine 5'-phosphate from D-erythrose 4-phosphate: step 3/5. In terms of biological role, catalyzes the reversible conversion of 3-phosphohydroxypyruvate to phosphoserine and of 3-hydroxy-2-oxo-4-phosphonooxybutanoate to phosphohydroxythreonine. The chain is Phosphoserine aminotransferase from Ralstonia nicotianae (strain ATCC BAA-1114 / GMI1000) (Ralstonia solanacearum).